A 452-amino-acid polypeptide reads, in one-letter code: UDP-N-acetylmuramate--L-alanine ligase (452 aa).

110–116 is a binding site for ATP; that stretch reads GTHGKTT.

This sequence belongs to the MurCDEF family.

It is found in the cytoplasm. The catalysed reaction is UDP-N-acetyl-alpha-D-muramate + L-alanine + ATP = UDP-N-acetyl-alpha-D-muramoyl-L-alanine + ADP + phosphate + H(+). Its pathway is cell wall biogenesis; peptidoglycan biosynthesis. In terms of biological role, cell wall formation. This chain is UDP-N-acetylmuramate--L-alanine ligase, found in Francisella philomiragia subsp. philomiragia (strain ATCC 25017 / CCUG 19701 / FSC 153 / O#319-036).